Reading from the N-terminus, the 415-residue chain is Histidine--tRNA ligase (415 aa).

The protein belongs to the class-II aminoacyl-tRNA synthetase family. Homodimer.

It localises to the cytoplasm. The catalysed reaction is tRNA(His) + L-histidine + ATP = L-histidyl-tRNA(His) + AMP + diphosphate + H(+). This Rickettsia akari (strain Hartford) protein is Histidine--tRNA ligase.